An 86-amino-acid chain; its full sequence is Serine protease inhibitor Kazal-type 4 (86 aa).

A signal peptide spans 1–26; the sequence is MAMHLWLVTLTLVPLLGMDRELMVSA. The 56-residue stretch at 31–86 folds into the Kazal-like domain; sequence FPRMPFCEHMAELPNCPQTPNLICGTDGLTYENECHLCLTRMKTMKDIQIMKDGQC. 3 disulfides stabilise this stretch: Cys-37/Cys-68, Cys-46/Cys-65, and Cys-54/Cys-86.

Expressed in the intestinal tract.

Its subcellular location is the secreted. This chain is Serine protease inhibitor Kazal-type 4 (Spink4), found in Mus musculus (Mouse).